We begin with the raw amino-acid sequence, 485 residues long: Dipeptide and tripeptide permease C (485 aa).

The Cytoplasmic segment spans residues 1–12 (MKTPSQPRAIYY). The chain crosses the membrane as a helical span at residues 13–33 (IVAIQIWEYFSFYGMRALLIL). The Periplasmic portion of the chain corresponds to 34 to 46 (YLTHQLGFDDNHA). A helical membrane pass occupies residues 47-67 (ISLFSAYASLVYVTPILGGWL). The Cytoplasmic segment spans residues 68 to 70 (ADR). A helical transmembrane segment spans residues 71–93 (LLGNRTAVIAGALLMTLGHVVLG). Residues 94-102 (IDTNSTFSL) are Periplasmic-facing. The chain crosses the membrane as a helical span at residues 103-125 (YLALAIIICGYGLFKSNISCLLG). At 126–140 (ELYDENDHRRDGGFS) the chain is on the cytoplasmic side. A helical membrane pass occupies residues 141-161 (LLYAAGNIGSIAAPIACGLAA). Residues 162–164 (QWY) are Periplasmic-facing. Residues 165 to 185 (GWHVGFALAGGGMFIGLLIFL) form a helical membrane-spanning segment. Residues 186–208 (SGHRHFQSTRSMDKKALTSVKFA) lie on the Cytoplasmic side of the membrane. Residues 209-229 (LPVWSWLVVMLCLAPVFFTLL) form a helical membrane-spanning segment. The Periplasmic portion of the chain corresponds to 230-234 (LENDW). The helical transmembrane segment at 235–255 (SGYLLAIVCLIAAQIIARMMI) threads the bilayer. At 256-262 (KFPEHRR) the chain is on the cytoplasmic side. The chain crosses the membrane as a helical span at residues 263–283 (ALWQIVLLMFVGTLFWVLAQQ). At 284–307 (GGSTISLFIDRFVNRQAFNIEVPT) the chain is on the periplasmic side. The chain crosses the membrane as a helical span at residues 308-328 (ALFQSVNAIAVMLAGVVLAWL). Residues 329 to 340 (ASPESRGNSTLR) are Cytoplasmic-facing. Residues 341-361 (VWLKFAFGLLLMACGFMLLAF) form a helical membrane-spanning segment. At 362 to 375 (DARHAAADGQASMG) the chain is on the periplasmic side. Residues 376-396 (VMISGLALMGFAELFIDPVAI) form a helical membrane-spanning segment. Residues 397–406 (AQITRLKMSG) are Cytoplasmic-facing. A helical transmembrane segment spans residues 407-427 (VLTGIYMLATGAVANWLAGVV). Topologically, residues 428-446 (AQQTTESQISGMAIAAYQR) are periplasmic. The helical transmembrane segment at 447–467 (FFSQMGEWTLACVAIIVVLAF) threads the bilayer. Over 468-485 (ATRFLFSTPTNMIQESND) the chain is Cytoplasmic.

This sequence belongs to the major facilitator superfamily. Proton-dependent oligopeptide transporter (POT/PTR) (TC 2.A.17) family. Monomer.

The protein localises to the cell inner membrane. In terms of biological role, proton-dependent permease that transports di- and tripeptides. Shows significantly higher specificity towards dipeptides than tripeptides. Has a preference for dipeptides with a C-terminal Lys residue. Can bind Ala-Lys, Lys-Ala, Ala-Ala. Can also transport alanine and trialanine. This chain is Dipeptide and tripeptide permease C, found in Escherichia coli (strain K12).